The following is a 496-amino-acid chain: Versicolorin B desaturase stcL (496 aa).

The helical transmembrane segment at 3–23 (FLSLPILTALGAVVYVLFQLV) threads the bilayer. Cys-440 provides a ligand contact to heme.

It belongs to the cytochrome P450 family. The cofactor is heme.

It localises to the membrane. The catalysed reaction is versicolorin B + NADPH + O2 + H(+) = versicolorin A + NADP(+) + 2 H2O. The protein operates within mycotoxin biosynthesis; sterigmatocystin biosynthesis. Functionally, cytochrome P450 monooxygenase; part of the gene cluster that mediates the biosynthesis of sterigmatocystin (ST), a polyketide-derived furanocoumarin which is part of the most toxic and carcinogenic compounds among the known mycotoxins. The first step in the biosynthesis of sterigmatocystin is the production of hexanoate by the fatty acid synthase (FAS) units stcJ and stcK. The polyketide backbone is assembled by the non-reducing polyketide synthase stcA by condensation of the starter hexanoyl-CoA and 7 malonyl-CoA extender units followed by cyclization and release of norsolorinic acid. Norsolorinic acid is the first stable intermediate in the biosynthesis of sterigmatocystin and is converted into averantin (AVN) by the ketoreductase stcE which reduces the hexanoate ketone to an alcohol. Averantin is then oxidized into 5'-hydroxyaverantin (HAVN) by the cytochrome P450 monooxygenase stcF. 5'-hydroxyaverantin is further converted to 5'-oxyaverantin (OAVN) by the 5'-hydroxyaverantin dehydrogenase stcG. The next step is the conversion of OAVN into averufin (AVF) which is catalyzed by a yet to be identified enzyme. The cytochrome P450 monooxygenase stcB and the flavin-binding monooxygenase stcW are both required for the conversion of averufin to 1-hydroxyversicolorone. The esterase stcI probably catalyzes the formation of versiconal hemiacetal acetate from 1-hydroxyversicolorone. The oxydoreductase stcN then probably catalyzes the biosynthetic step from versiconal to versicolorin B (VERB). The next step is performed by the versicolorin B desaturase stcL to produce versicolorin A (VERA). The ketoreductase stcU and the cytochrome P450 monooxygenase stcS are involved in the conversion of versicolorin A to demethylsterigmatocystin. The Baeyer-Villiger oxidas stcQ and the reductase stcR might be involved in the biosynthetic step from versicolorin A to demethylsterigmatocystin. The final step in the biosynthesis of sterigmatocystin is the methylation of demethylsterigmatocystin catalyzed by the methyltransferase stcP. The sequence is that of Versicolorin B desaturase stcL from Emericella nidulans (strain FGSC A4 / ATCC 38163 / CBS 112.46 / NRRL 194 / M139) (Aspergillus nidulans).